Consider the following 272-residue polypeptide: Probable ribonuclease HI_0526 (272 aa).

The N-terminal stretch at 1 to 23 (MKKLTSILSLIVLVILAIWQYFT) is a signal peptide. Catalysis depends on residues histidine 148, glutamate 195, and histidine 199.

The protein belongs to the RNase T2 family.

In Haemophilus influenzae (strain ATCC 51907 / DSM 11121 / KW20 / Rd), this protein is Probable ribonuclease HI_0526.